We begin with the raw amino-acid sequence, 354 residues long: uncharacterized protein (354 aa).

An ABC transporter domain is found at 48–285 (VETWEISKIY…DEGYEVVLKG (238 aa)). 87 to 94 (GPNGAGKT) serves as a coordination point for ATP.

Belongs to the ABC transporter superfamily.

This is an uncharacterized protein from Synechocystis sp. (strain ATCC 27184 / PCC 6803 / Kazusa).